The following is a 126-amino-acid chain: Phosphoribosyl-AMP cyclohydrolase (126 aa).

Asp-82 contributes to the Mg(2+) binding site. A Zn(2+)-binding site is contributed by Cys-83. Residues Asp-84 and Asp-86 each contribute to the Mg(2+) site. Zn(2+) contacts are provided by Cys-99 and Cys-106.

It belongs to the PRA-CH family. In terms of assembly, homodimer. It depends on Mg(2+) as a cofactor. Zn(2+) is required as a cofactor.

It localises to the cytoplasm. It catalyses the reaction 1-(5-phospho-beta-D-ribosyl)-5'-AMP + H2O = 1-(5-phospho-beta-D-ribosyl)-5-[(5-phospho-beta-D-ribosylamino)methylideneamino]imidazole-4-carboxamide. Its pathway is amino-acid biosynthesis; L-histidine biosynthesis; L-histidine from 5-phospho-alpha-D-ribose 1-diphosphate: step 3/9. Its function is as follows. Catalyzes the hydrolysis of the adenine ring of phosphoribosyl-AMP. In Micrococcus luteus (strain ATCC 4698 / DSM 20030 / JCM 1464 / CCM 169 / CCUG 5858 / IAM 1056 / NBRC 3333 / NCIMB 9278 / NCTC 2665 / VKM Ac-2230) (Micrococcus lysodeikticus), this protein is Phosphoribosyl-AMP cyclohydrolase.